Consider the following 284-residue polypeptide: uncharacterized protein (284 aa).

10 N-linked (GlcNAc...) asparagine; by host glycosylation sites follow: N79, N102, N111, N147, N162, N174, N196, N211, N228, and N234. Residues 239 to 259 (AFTYGSWGVAMLLFAAVMVLV) form a helical membrane-spanning segment.

It belongs to the RL11 family.

The protein resides in the membrane. This is an uncharacterized protein from Human cytomegalovirus (strain AD169) (HHV-5).